A 354-amino-acid chain; its full sequence is S-adenosylmethionine:tRNA ribosyltransferase-isomerase (354 aa).

This sequence belongs to the QueA family. Monomer.

The protein resides in the cytoplasm. The catalysed reaction is 7-aminomethyl-7-carbaguanosine(34) in tRNA + S-adenosyl-L-methionine = epoxyqueuosine(34) in tRNA + adenine + L-methionine + 2 H(+). Its pathway is tRNA modification; tRNA-queuosine biosynthesis. In terms of biological role, transfers and isomerizes the ribose moiety from AdoMet to the 7-aminomethyl group of 7-deazaguanine (preQ1-tRNA) to give epoxyqueuosine (oQ-tRNA). The polypeptide is S-adenosylmethionine:tRNA ribosyltransferase-isomerase (Dichelobacter nodosus (strain VCS1703A)).